A 207-amino-acid polypeptide reads, in one-letter code: Thymidylate kinase (207 aa).

Residue 9-16 (GGEGCGKS) participates in ATP binding.

The protein belongs to the thymidylate kinase family.

The enzyme catalyses dTMP + ATP = dTDP + ADP. Functionally, phosphorylation of dTMP to form dTDP in both de novo and salvage pathways of dTTP synthesis. The polypeptide is Thymidylate kinase (Dehalococcoides mccartyi (strain ATCC BAA-2266 / KCTC 15142 / 195) (Dehalococcoides ethenogenes (strain 195))).